Consider the following 335-residue polypeptide: Fructose-1,6-bisphosphatase class 1 (335 aa).

Residues glutamate 92, aspartate 114, leucine 116, and aspartate 117 each coordinate Mg(2+). Residues 117 to 120 (DGSS), asparagine 210, tyrosine 242, and lysine 274 each bind substrate. Glutamate 280 contributes to the Mg(2+) binding site.

It belongs to the FBPase class 1 family. Homotetramer. Mg(2+) is required as a cofactor.

The protein localises to the cytoplasm. The catalysed reaction is beta-D-fructose 1,6-bisphosphate + H2O = beta-D-fructose 6-phosphate + phosphate. It participates in carbohydrate biosynthesis; gluconeogenesis. The polypeptide is Fructose-1,6-bisphosphatase class 1 (Lawsonia intracellularis (strain PHE/MN1-00)).